The following is a 119-amino-acid chain: MARVKRGVQARARHKKVLKQAKGYYGARSRVYRVAYQAVTKAGQYAYRDRRQRKRQFRQLWIARINAAARQNGLSYSKFINGLKKASIEIDRKILADIAVYDKAAFTFLVEKAQASLAA.

It belongs to the bacterial ribosomal protein bL20 family.

Its function is as follows. Binds directly to 23S ribosomal RNA and is necessary for the in vitro assembly process of the 50S ribosomal subunit. It is not involved in the protein synthesizing functions of that subunit. The chain is Large ribosomal subunit protein bL20 from Colwellia psychrerythraea (strain 34H / ATCC BAA-681) (Vibrio psychroerythus).